A 211-amino-acid chain; its full sequence is MRFGVDEAGKGPVLGSMFAAAVRADPAALPGGVGDSKDIRPERRERLAKEIRESADAVGIAEISVERIDADETDMNTLTVEGQAEALSAVARDGLSGTVDAGDTDAARFGRRVADAVDTDVAVTAEHGADETDSLVGAASIIAKVARDTHVAELAAEYGDVGSGYPSDPTTRTFLADYVDRHGELPACARRSWSTCDDVLAAASQSTLSDF.

One can recognise an RNase H type-2 domain in the interval 1–205; sequence MRFGVDEAGK…CDDVLAAASQ (205 aa). 3 residues coordinate a divalent metal cation: Asp6, Glu7, and Asp100.

It belongs to the RNase HII family. Requires Mn(2+) as cofactor. Mg(2+) is required as a cofactor.

It is found in the cytoplasm. The enzyme catalyses Endonucleolytic cleavage to 5'-phosphomonoester.. Functionally, endonuclease that specifically degrades the RNA of RNA-DNA hybrids. The chain is Ribonuclease HII from Haloarcula marismortui (strain ATCC 43049 / DSM 3752 / JCM 8966 / VKM B-1809) (Halobacterium marismortui).